Reading from the N-terminus, the 208-residue chain is Small ribosomal subunit protein uS4 (208 aa).

An S4 RNA-binding domain is found at 95–161 (MRLDALVLRA…VPLQVAAAGA (67 aa)).

The protein belongs to the universal ribosomal protein uS4 family. As to quaternary structure, part of the 30S ribosomal subunit. Contacts protein S5. The interaction surface between S4 and S5 is involved in control of translational fidelity.

One of the primary rRNA binding proteins, it binds directly to 16S rRNA where it nucleates assembly of the body of the 30S subunit. Its function is as follows. With S5 and S12 plays an important role in translational accuracy. The polypeptide is Small ribosomal subunit protein uS4 (Pseudarthrobacter chlorophenolicus (strain ATCC 700700 / DSM 12829 / CIP 107037 / JCM 12360 / KCTC 9906 / NCIMB 13794 / A6) (Arthrobacter chlorophenolicus)).